We begin with the raw amino-acid sequence, 668 residues long: CLK4-associating serine/arginine rich protein (668 aa).

Serine 101 is modified (phosphoserine). Disordered regions lie at residues alanine 173 to aspartate 232 and alanine 252 to histidine 668. The segment covering proline 182–asparagine 214 has biased composition (acidic residues). The segment covering arginine 265–lysine 283 has biased composition (basic residues). Phosphoserine is present on residues serine 285 and serine 294. Over residues alanine 290–serine 313 the composition is skewed to basic and acidic residues. Residue threonine 327 is modified to Phosphothreonine. A phosphoserine mark is found at serine 331 and serine 335. Low complexity predominate over residues alanine 340 to proline 353. Pro residues predominate over residues glycine 354–proline 365. A compositionally biased stretch (low complexity) spans serine 378 to serine 395. Residues serine 396–arginine 435 show a composition bias toward basic residues. Residues histidine 436–arginine 446 show a composition bias toward basic and acidic residues. Basic residues predominate over residues arginine 475–serine 486. 2 stretches are compositionally biased toward low complexity: residues histidine 487–glutamine 510 and glutamine 518–serine 527. A Phosphoserine modification is found at serine 541. Threonine 567 bears the Phosphothreonine mark. A coiled-coil region spans residues alanine 579–serine 641. Composition is skewed to basic and acidic residues over residues phenylalanine 584–alanine 611 and lysine 619–tyrosine 635. Residues serine 636–arginine 645 show a composition bias toward low complexity. The span at serine 653–histidine 668 shows a compositional bias: basic residues.

Belongs to the splicing factor SR family. Probably interacts with CLK4. Post-translationally, phosphorylated in vitro by CLK4.

Its subcellular location is the nucleus. In terms of biological role, probably functions as an alternative splicing regulator. May regulate the mRNA splicing of genes such as CLK1. May act by regulating members of the CLK kinase family. This Rattus norvegicus (Rat) protein is CLK4-associating serine/arginine rich protein (Clasrp).